A 1544-amino-acid chain; its full sequence is GATOR complex protein Iml1 (1544 aa).

Disordered regions lie at residues 615-649 (QAVPAKPTQAGQQRPLQQTQSNNNNDQEDYGCENG) and 1037-1072 (RRHSTSIISRPQPNQGLTNSPFRERVGSNRLPEKRP). Polar residues-rich tracts occupy residues 623–639 (QAGQQRPLQQTQSNNNN) and 1041–1057 (TSIISRPQPNQGLTNSP). The span at 1058 to 1072 (FRERVGSNRLPEKRP) shows a compositional bias: basic and acidic residues.

It belongs to the IML1 family. Component of the GATOR complex consisting of mio, Nup44A/Seh1, Im11, Nplr3, Nplr2, Wdr24, Wdr59 and Sec13. Within the GATOR complex, probable component of the GATOR1 subcomplex which is likely composed of Iml1, Nplr2 and Nplr3.

In terms of biological role, an essential component of the GATOR subcomplex GATOR1 which functions as an inhibitor of the amino acid-sensing branch of the TORC1 signaling pathway. The two GATOR subcomplexes, GATOR1 and GATOR2, regulate the TORC1 pathway in order to mediate metabolic homeostasis, female gametogenesis and the response to amino acid limitation and complete starvation. The function of GATOR1 in negatively regulating the TORC1 pathway is essential for maintaining baseline levels of TORC1 activity under nutrient rich conditions, and for promoting survival during amino acid or complete starvation by inhibiting TORC1-dependent cell growth and promoting catabolic metabolism and autophagy. GATOR1 and GATOR2 act at different stages of oogenesis to regulate TORC1 in order to control meiotic entry and promote oocyte growth and development. After exactly four mitotic cyst divisions, the GATOR1 complex members (Iml1, Nprl2 and Nprl3) down-regulate TORC1 to slow cellular metabolism and promote the mitotic/meiotic transition. At later stages of oogenesis, the mio and Nup44A components of the GATOR2 complex inhibit GATOR1 and thus activate TORC1 to promote meiotic progression, and drive oocyte growth and development. In Drosophila melanogaster (Fruit fly), this protein is GATOR complex protein Iml1.